The sequence spans 431 residues: Probable indole-3-pyruvate monooxygenase YUCCA7 (431 aa).

Position 36–41 (36–41 (GAGPSG)) interacts with FAD. Residue 207–212 (GCGNSG) participates in NADP(+) binding.

The protein belongs to the FMO family. FAD serves as cofactor. Expressed in shoot apex regions and siliques, and at high levels in roots. Detected in flowers, stems and leaves.

It catalyses the reaction indole-3-pyruvate + NADPH + O2 + H(+) = (indol-3-yl)acetate + CO2 + NADP(+) + H2O. It participates in plant hormone metabolism; auxin biosynthesis. Involved in auxin biosynthesis. Belongs to the set of redundant YUCCA genes probably responsible for auxin biosynthesis in roots. The chain is Probable indole-3-pyruvate monooxygenase YUCCA7 (YUC7) from Arabidopsis thaliana (Mouse-ear cress).